A 108-amino-acid polypeptide reads, in one-letter code: Cytochrome bo(3) ubiquinol oxidase subunit 4 (108 aa).

Residues 1–16 (MNKYKKIKNNFDKEKK) lie on the Cytoplasmic side of the membrane. The helical transmembrane segment at 17–37 (SYIVGFLFSLFLTIIPFFCTL) threads the bilayer. At 38–46 (NHLFSRKIN) the chain is on the extracellular side. Residues 47 to 67 (FFVILLCALSQIIIHFIYFLH) form a helical membrane-spanning segment. Topologically, residues 68–77 (LDFSKKNSWN) are cytoplasmic. A helical membrane pass occupies residues 78-98 (IISLLFILIIVFIIVFGSIWI). Residues 99–108 (MYNLNHHVIL) lie on the Extracellular side of the membrane.

Belongs to the cytochrome c oxidase bacterial subunit 4 family. Heterooctamer of two A chains, two B chains, two C chains and two D chains.

It is found in the cell membrane. Its function is as follows. Cytochrome bo(3) ubiquinol terminal oxidase is the component of the aerobic respiratory chain of E.coli that predominates when cells are grown at high aeration. Has proton pump activity across the membrane in addition to electron transfer, pumping 2 protons/electron. In Buchnera aphidicola subsp. Schizaphis graminum (strain Sg), this protein is Cytochrome bo(3) ubiquinol oxidase subunit 4 (cyoD).